Consider the following 167-residue polypeptide: Translationally-controlled tumor protein homolog (167 aa).

Residues 1–167 (MIIYKDIFSN…WKHGIVEEKI (167 aa)) enclose the TCTP domain. Phosphoserine is present on residues serine 9 and serine 15.

Belongs to the TCTP family. Interacts with the 40S and 60S ribosomal subunits. Interacts with microtubules.

The protein localises to the cytoplasm. It localises to the cytoskeleton. It is found in the mitochondrion. Involved in protein synthesis. Involved in microtubule stabilization. The protein is Translationally-controlled tumor protein homolog (TMA19) of Saccharomyces cerevisiae (strain ATCC 204508 / S288c) (Baker's yeast).